We begin with the raw amino-acid sequence, 200 residues long: dITP/XTP pyrophosphatase (200 aa).

8-13 provides a ligand contact to substrate; sequence THNPNK. Mg(2+) contacts are provided by E41 and D71. Catalysis depends on D71, which acts as the Proton acceptor. Substrate contacts are provided by residues T72, 153 to 156, K176, and 181 to 182; these read FGYD and HR.

The protein belongs to the HAM1 NTPase family. In terms of assembly, homodimer. Requires Mg(2+) as cofactor.

It carries out the reaction XTP + H2O = XMP + diphosphate + H(+). The enzyme catalyses dITP + H2O = dIMP + diphosphate + H(+). It catalyses the reaction ITP + H2O = IMP + diphosphate + H(+). In terms of biological role, pyrophosphatase that catalyzes the hydrolysis of nucleoside triphosphates to their monophosphate derivatives, with a high preference for the non-canonical purine nucleotides XTP (xanthosine triphosphate), dITP (deoxyinosine triphosphate) and ITP. Seems to function as a house-cleaning enzyme that removes non-canonical purine nucleotides from the nucleotide pool, thus preventing their incorporation into DNA/RNA and avoiding chromosomal lesions. The sequence is that of dITP/XTP pyrophosphatase from Caldanaerobacter subterraneus subsp. tengcongensis (strain DSM 15242 / JCM 11007 / NBRC 100824 / MB4) (Thermoanaerobacter tengcongensis).